The sequence spans 499 residues: Glycerol kinase (499 aa).

Residue threonine 13 coordinates ADP. ATP is bound by residues threonine 13, threonine 14, and serine 15. Position 13 (threonine 13) interacts with sn-glycerol 3-phosphate. Residue arginine 17 coordinates ADP. Sn-glycerol 3-phosphate contacts are provided by arginine 83, glutamate 84, tyrosine 135, and aspartate 245. The glycerol site is built by arginine 83, glutamate 84, tyrosine 135, aspartate 245, and glutamine 246. Positions 267 and 310 each coordinate ADP. ATP contacts are provided by threonine 267, glycine 310, glutamine 314, and glycine 411. 2 residues coordinate ADP: glycine 411 and asparagine 415.

It belongs to the FGGY kinase family.

The enzyme catalyses glycerol + ATP = sn-glycerol 3-phosphate + ADP + H(+). Its pathway is polyol metabolism; glycerol degradation via glycerol kinase pathway; sn-glycerol 3-phosphate from glycerol: step 1/1. With respect to regulation, inhibited by fructose 1,6-bisphosphate (FBP). In terms of biological role, key enzyme in the regulation of glycerol uptake and metabolism. Catalyzes the phosphorylation of glycerol to yield sn-glycerol 3-phosphate. In Xanthomonas axonopodis pv. citri (strain 306), this protein is Glycerol kinase.